We begin with the raw amino-acid sequence, 95 residues long: RING finger protein Z (95 aa).

The span at 1 to 17 (MGNCNRTQKPSSSSNNL) shows a compositional bias: polar residues. Residues 1–25 (MGNCNRTQKPSSSSNNLEKPPQAAE) form a disordered region. G2 carries the N-myristoyl glycine; by host lipid modification. Residues 40 to 76 (CKCCWFADKNLITCSDHYLCLRCHQIMLRNSELCNIC) form an RING-type; atypical zinc finger. Residues 90 to 93 (ASAP) carry the ASAP motif motif.

This sequence belongs to the arenaviridae Z protein family. Interacts with protein NP; this interaction probably directs the encapsidated genome to budding sites. Interacts (via RING domain) with polymerase L; this interaction inhibits viral transcription and replication, Z partially blocks the product exit tunnel for the releasing nascent RNA product. Interacts with the glycoprotein complex; this interaction plays a role in virion budding. Interacts with host eIF4E; this interaction results in eIF4E reduced affinity for its substrate, the 5'-m7 G cap structure. Interacts (via late-budding domain) with host TSG101; this interaction is essential for budding and release of viral particles. Interacts with host RPLP0; this interaction may serve to load ribosome-like particles inside the virion. Interacts with host PML; this interaction induces PML bodies redistribution in the cytoplasm upon viral infection. Myristoylation is required for the role of RING finger protein Z in assembly and budding.

The protein resides in the virion. It is found in the host cytoplasm. It localises to the host perinuclear region. Its subcellular location is the host cell membrane. In terms of biological role, plays a crucial role in virion assembly and budding. Expressed late in the virus life cycle, it acts as an inhibitor of viral transcription and RNA synthesis by interacting with the viral polymerase L. Presumably recruits the NP encapsidated genome to cellular membranes at budding sites via direct interaction with NP. Plays critical roles in the final steps of viral release by interacting with host TSG101, a member of the vacuolar protein-sorting pathway and using other cellular host proteins involved in vesicle formation pathway. The budding of the virus progeny occurs after association of protein Z with the viral glycoprotein complex SSP-GP1-GP2 at the cell periphery, step that requires myristoylation of protein Z. Also selectively represses protein production by associating with host eIF4E. In cell-based minigenome assay, has an inhibitory effect on the ribonucleoprotein machinery (vRNP), which is responsible for the replication and transcription of the viral genome. This Tacaribe virus (strain Franze-Fernandez) (TCRV) protein is RING finger protein Z.